We begin with the raw amino-acid sequence, 1099 residues long: Zinc finger protein basonuclin-2 (1099 aa).

The disordered stretch occupies residues E45 to R66. Positions V49–R66 are enriched in basic and acidic residues. K277 is covalently cross-linked (Glycyl lysine isopeptide (Lys-Gly) (interchain with G-Cter in SUMO2)). Residues L357–N385 are disordered. Over residues N361–S372 the composition is skewed to low complexity. Positions P375–N385 are enriched in polar residues. Glycyl lysine isopeptide (Lys-Gly) (interchain with G-Cter in SUMO2) cross-links involve residues K396, K416, and K421. Residues T397–S423 form a disordered region. The C2H2-type 1 zinc-finger motif lies at V441–H464. The residue at position 561 (S561) is a Phosphoserine. Disordered regions lie at residues E622–K641 and D648–E742. Residue K641 forms a Glycyl lysine isopeptide (Lys-Gly) (interchain with G-Cter in SUMO2) linkage. Residues D648–N661 show a composition bias toward acidic residues. 2 stretches are compositionally biased toward basic and acidic residues: residues M670–E680 and E719–E742. Residues K833–H856 form a C2H2-type 2 zinc finger. Residues K894 and K919 each participate in a glycyl lysine isopeptide (Lys-Gly) (interchain with G-Cter in SUMO2) cross-link. Disordered regions lie at residues L929–G948 and L968–A1008. Residues A982–G995 show a composition bias toward acidic residues. 2 consecutive C2H2-type zinc fingers follow at residues I1035 to H1058 and H1063 to H1090. A disordered region spans residues S1079–D1099.

As to expression, highly expressed in testis, uterus and small intestine, and weakly expressed in colon and prostate. Also expressed in skin, primary keratinocytes, immortalized keratinocytes, and HeLa and HEK293 cells. Not detected in blood, thymus, spleen or Hep-G2 cells.

It is found in the nucleus. Probable transcription factor specific for skin keratinocytes. May play a role in the differentiation of spermatozoa and oocytes. May also play an important role in early urinary-tract development. The chain is Zinc finger protein basonuclin-2 from Homo sapiens (Human).